The following is a 189-amino-acid chain: ATP synthase subunit delta (189 aa).

This sequence belongs to the ATPase delta chain family. In terms of assembly, F-type ATPases have 2 components, F(1) - the catalytic core - and F(0) - the membrane proton channel. F(1) has five subunits: alpha(3), beta(3), gamma(1), delta(1), epsilon(1). F(0) has three main subunits: a(1), b(2) and c(10-14). The alpha and beta chains form an alternating ring which encloses part of the gamma chain. F(1) is attached to F(0) by a central stalk formed by the gamma and epsilon chains, while a peripheral stalk is formed by the delta and b chains.

The protein resides in the cell inner membrane. Functionally, f(1)F(0) ATP synthase produces ATP from ADP in the presence of a proton or sodium gradient. F-type ATPases consist of two structural domains, F(1) containing the extramembraneous catalytic core and F(0) containing the membrane proton channel, linked together by a central stalk and a peripheral stalk. During catalysis, ATP synthesis in the catalytic domain of F(1) is coupled via a rotary mechanism of the central stalk subunits to proton translocation. Its function is as follows. This protein is part of the stalk that links CF(0) to CF(1). It either transmits conformational changes from CF(0) to CF(1) or is implicated in proton conduction. The sequence is that of ATP synthase subunit delta from Rickettsia bellii (strain OSU 85-389).